Here is a 137-residue protein sequence, read N- to C-terminus: Large ribosomal subunit protein uL16 (137 aa).

The protein belongs to the universal ribosomal protein uL16 family. In terms of assembly, part of the 50S ribosomal subunit.

Functionally, binds 23S rRNA and is also seen to make contacts with the A and possibly P site tRNAs. The polypeptide is Large ribosomal subunit protein uL16 (Streptococcus sanguinis (strain SK36)).